A 621-amino-acid chain; its full sequence is Chaperone protein DnaK (621 aa).

Threonine 179 bears the Phosphothreonine; by autocatalysis mark. A compositionally biased stretch (polar residues) spans serine 583–aspartate 605. Positions serine 583–glutamate 621 are disordered. Residues asparagine 606–glutamate 621 are compositionally biased toward basic and acidic residues.

Belongs to the heat shock protein 70 family.

Acts as a chaperone. This is Chaperone protein DnaK from Endomicrobium trichonymphae.